A 394-amino-acid polypeptide reads, in one-letter code: Elongation factor Tu (394 aa).

The tr-type G domain occupies 10-204 (KPHVNVGTIG…ALDTYIPEPE (195 aa)). The interval 19–26 (GHVDHGKT) is G1. Residue 19-26 (GHVDHGKT) participates in GTP binding. Thr26 is a Mg(2+) binding site. A G2 region spans residues 60 to 64 (GITIN). The segment at 81-84 (DCPG) is G3. GTP is bound by residues 81–85 (DCPGH) and 136–139 (NKCD). Positions 136–139 (NKCD) are G4. The interval 174-176 (SAL) is G5.

It belongs to the TRAFAC class translation factor GTPase superfamily. Classic translation factor GTPase family. EF-Tu/EF-1A subfamily. As to quaternary structure, monomer.

It is found in the cytoplasm. It carries out the reaction GTP + H2O = GDP + phosphate + H(+). In terms of biological role, GTP hydrolase that promotes the GTP-dependent binding of aminoacyl-tRNA to the A-site of ribosomes during protein biosynthesis. The protein is Elongation factor Tu of Shewanella denitrificans (strain OS217 / ATCC BAA-1090 / DSM 15013).